Consider the following 946-residue polypeptide: Phosphatidylinositol 4,5-bisphosphate 5-phosphatase INP51 (946 aa).

Residues Leu151–Lys480 enclose the SAC domain. Disordered stretches follow at residues Ser872–Lys902 and Pro927–Arg946. Positions Glu936 to Arg946 are enriched in acidic residues.

Belongs to the synaptojanin family. It in the central section; belongs to the inositol 1,4,5-trisphosphate 5-phosphatase family. Interacts with IRS4 and TAX4.

It is found in the cytoplasm. It localises to the cytoskeleton. The protein resides in the actin patch. The catalysed reaction is a 1,2-diacyl-sn-glycero-3-phospho-(1D-myo-inositol-4,5-bisphosphate) + H2O = a 1,2-diacyl-sn-glycero-3-phospho-(1D-myo-inositol 4-phosphate) + phosphate. IRS4 and TAX4 are both positive regulator of INP51 activity and phosphatidylinositol 4,5-bisphosphate turnover. Its function is as follows. Controls the cellular levels and subcellular distribution of phosphatidylinositol 4,5-bisphosphate (PtdIns(4,5)P2). Does not utilize phosphatidylinositol 3,5-bisphosphate (PtdIns(3,5)P2), nor phosphatidylinositol 3-phosphate (PtdIns(3)P) and phosphatidylinositol 4-phosphate (PtdIns(4)P). Plays an essential role in a TGN (trans Golgi network)-to-early endosome pathway. Involved in endocytosis and acts as a negative regulator of the Slm pathway which modulates polarized actin assembly and growth. This chain is Phosphatidylinositol 4,5-bisphosphate 5-phosphatase INP51 (INP51), found in Saccharomyces cerevisiae (strain ATCC 204508 / S288c) (Baker's yeast).